The chain runs to 217 residues: Meiotic expression up-regulated protein 29 (217 aa).

The signal sequence occupies residues 1 to 21; sequence MFVVKTAVLLFFALFIGNTYA. The Extracellular portion of the chain corresponds to 22–133; sequence YTYSLDRIQA…SGVLLHRPWK (112 aa). N-linked (GlcNAc...) asparagine glycosylation occurs at N84. The chain crosses the membrane as a helical span at residues 134–154; the sequence is LFSLKPFTAAFVLLLAASYLA. Residues 155–217 lie on the Cytoplasmic side of the membrane; sequence TACFRMLGYL…VPVPVLDESV (63 aa).

It localises to the membrane. This chain is Meiotic expression up-regulated protein 29 (meu29), found in Schizosaccharomyces pombe (strain 972 / ATCC 24843) (Fission yeast).